The primary structure comprises 499 residues: UDP-N-acetylmuramoyl-L-alanyl-D-glutamate--2,6-diaminopimelate ligase (499 aa).

Residues Leu30 and Ser32 each contribute to the UDP-N-acetyl-alpha-D-muramoyl-L-alanyl-D-glutamate site. An ATP-binding site is contributed by 122 to 128 (GTNGKTT). UDP-N-acetyl-alpha-D-muramoyl-L-alanyl-D-glutamate-binding positions include 164-165 (TT), Ser191, Gln197, and Arg199. The residue at position 231 (Lys231) is an N6-carboxylysine. Meso-2,6-diaminopimelate is bound by residues Arg397, 421-424 (DNPR), Gly472, and Glu476. Positions 421 to 424 (DNPR) match the Meso-diaminopimelate recognition motif motif.

It belongs to the MurCDEF family. MurE subfamily. Mg(2+) serves as cofactor. Carboxylation is probably crucial for Mg(2+) binding and, consequently, for the gamma-phosphate positioning of ATP.

It localises to the cytoplasm. The enzyme catalyses UDP-N-acetyl-alpha-D-muramoyl-L-alanyl-D-glutamate + meso-2,6-diaminopimelate + ATP = UDP-N-acetyl-alpha-D-muramoyl-L-alanyl-gamma-D-glutamyl-meso-2,6-diaminopimelate + ADP + phosphate + H(+). It functions in the pathway cell wall biogenesis; peptidoglycan biosynthesis. Functionally, catalyzes the addition of meso-diaminopimelic acid to the nucleotide precursor UDP-N-acetylmuramoyl-L-alanyl-D-glutamate (UMAG) in the biosynthesis of bacterial cell-wall peptidoglycan. The polypeptide is UDP-N-acetylmuramoyl-L-alanyl-D-glutamate--2,6-diaminopimelate ligase (Blochmanniella floridana).